We begin with the raw amino-acid sequence, 350 residues long: Putative isomerase YbhH (350 aa).

The protein belongs to the PrpF family.

The polypeptide is Putative isomerase YbhH (ybhH) (Escherichia coli O6:H1 (strain CFT073 / ATCC 700928 / UPEC)).